The following is a 400-amino-acid chain: Glycine betaine/proline betaine transport system ATP-binding protein ProV (400 aa).

In terms of domain architecture, ABC transporter spans 29 to 265 (LSKEQILEKT…PANDYVRTFF (237 aa)). 61-68 (GLSGSGKS) provides a ligand contact to ATP. CBS domains follow at residues 280–341 (ARRS…GIEA) and 343–400 (LIDD…GNNG).

The protein belongs to the ABC transporter superfamily. In terms of assembly, the complex is composed of two ATP-binding proteins (ProV), two transmembrane proteins (ProW) and a solute-binding protein (ProX).

It localises to the cell inner membrane. Its function is as follows. Part of the ProU ABC transporter complex involved in glycine betaine and proline betaine uptake. Probably responsible for energy coupling to the transport system. This Salmonella typhimurium (strain LT2 / SGSC1412 / ATCC 700720) protein is Glycine betaine/proline betaine transport system ATP-binding protein ProV.